The following is a 73-amino-acid chain: Aminopeptidase G (73 aa).

Residues 39–73 (GRRAASSSWPGRGSSRRWRPGRRTGAAARGCWRAP) form a disordered region. Low complexity-rich tracts occupy residues 42-51 (AASSSWPGRG) and 61-73 (RTGA…WRAP).

It belongs to the peptidase M1 family. Zn(2+) is required as a cofactor.

Its subcellular location is the cytoplasm. Its function is as follows. Hydrolyzes preferentially the N-terminal glycine and can also hydrolyze other amino acids which are used by PepN but is unable to hydrolyze basic amino acids. This chain is Aminopeptidase G (pepG), found in Streptomyces lividans.